Here is a 100-residue protein sequence, read N- to C-terminus: Large ribosomal subunit protein uL23 (100 aa).

This sequence belongs to the universal ribosomal protein uL23 family. Part of the 50S ribosomal subunit. Contacts protein L29, and trigger factor when it is bound to the ribosome.

Its function is as follows. One of the early assembly proteins it binds 23S rRNA. One of the proteins that surrounds the polypeptide exit tunnel on the outside of the ribosome. Forms the main docking site for trigger factor binding to the ribosome. The sequence is that of Large ribosomal subunit protein uL23 from Prochlorococcus marinus (strain AS9601).